We begin with the raw amino-acid sequence, 239 residues long: Ribosomal RNA small subunit methyltransferase G (239 aa).

Residues G79, F84, 130–131, and R149 contribute to the S-adenosyl-L-methionine site; that span reads AE.

Belongs to the methyltransferase superfamily. RNA methyltransferase RsmG family.

The protein resides in the cytoplasm. Specifically methylates the N7 position of a guanine in 16S rRNA. The polypeptide is Ribosomal RNA small subunit methyltransferase G (Lactobacillus delbrueckii subsp. bulgaricus (strain ATCC BAA-365 / Lb-18)).